Consider the following 169-residue polypeptide: Small ribosomal subunit protein bS16 (169 aa).

The segment at 114-169 (AEGPTAEAITEKRRKAKEEAEAKAAAEAEAAEKAEAEAAEKAAAEAAEESEEASAE) is disordered. Over residues 129–156 (AKEEAEAKAAAEAEAAEKAEAEAAEKAA) the composition is skewed to basic and acidic residues. The segment covering 159–169 (AAEESEEASAE) has biased composition (acidic residues).

It belongs to the bacterial ribosomal protein bS16 family.

In Corynebacterium urealyticum (strain ATCC 43042 / DSM 7109), this protein is Small ribosomal subunit protein bS16.